Consider the following 506-residue polypeptide: Maturase K (506 aa).

Belongs to the intron maturase 2 family. MatK subfamily.

The protein resides in the plastid. It is found in the chloroplast. In terms of biological role, usually encoded in the trnK tRNA gene intron. Probably assists in splicing its own and other chloroplast group II introns. The protein is Maturase K of Crataegus monogyna (Hawthorn).